The sequence spans 58 residues: U8-ctenitoxin-Pr1a (58 aa).

Disulfide bonds link C2–C16, C9–C22, C15–C40, C24–C38, and C48–C55.

In terms of tissue distribution, expressed by the venom gland.

It is found in the secreted. Its function is as follows. No toxic effects on mice at dose levels of 5 ug per mouse. May be toxic to insects. The polypeptide is U8-ctenitoxin-Pr1a (Phoneutria reidyi (Brazilian Amazonian armed spider)).